Reading from the N-terminus, the 100-residue chain is Urease subunit gamma (100 aa).

This sequence belongs to the urease gamma subunit family. As to quaternary structure, heterotrimer of UreA (gamma), UreB (beta) and UreC (alpha) subunits. Three heterotrimers associate to form the active enzyme.

Its subcellular location is the cytoplasm. The catalysed reaction is urea + 2 H2O + H(+) = hydrogencarbonate + 2 NH4(+). Its pathway is nitrogen metabolism; urea degradation; CO(2) and NH(3) from urea (urease route): step 1/1. This Limosilactobacillus fermentum (Lactobacillus fermentum) protein is Urease subunit gamma.